The primary structure comprises 252 residues: Probable transcriptional regulatory protein Tmel_0985 (252 aa).

The protein belongs to the TACO1 family.

It localises to the cytoplasm. This Thermosipho melanesiensis (strain DSM 12029 / CIP 104789 / BI429) protein is Probable transcriptional regulatory protein Tmel_0985.